Reading from the N-terminus, the 430-residue chain is Enolase (430 aa).

Glutamine 165 contacts (2R)-2-phosphoglycerate. Glutamate 207 acts as the Proton donor in catalysis. 3 residues coordinate Mg(2+): aspartate 244, glutamate 287, and aspartate 314. (2R)-2-phosphoglycerate contacts are provided by lysine 339, arginine 368, serine 369, and lysine 390. The active-site Proton acceptor is lysine 339.

This sequence belongs to the enolase family. As to quaternary structure, component of the RNA degradosome, a multiprotein complex involved in RNA processing and mRNA degradation. Mg(2+) is required as a cofactor.

It is found in the cytoplasm. It localises to the secreted. The protein resides in the cell surface. The enzyme catalyses (2R)-2-phosphoglycerate = phosphoenolpyruvate + H2O. It participates in carbohydrate degradation; glycolysis; pyruvate from D-glyceraldehyde 3-phosphate: step 4/5. Its function is as follows. Catalyzes the reversible conversion of 2-phosphoglycerate (2-PG) into phosphoenolpyruvate (PEP). It is essential for the degradation of carbohydrates via glycolysis. The sequence is that of Enolase from Xylella fastidiosa (strain 9a5c).